We begin with the raw amino-acid sequence, 282 residues long: 4-diphosphocytidyl-2-C-methyl-D-erythritol kinase (282 aa).

Lysine 11 is an active-site residue. 95–105 (PMGGGVGGGSS) contributes to the ATP binding site. The active site involves aspartate 137.

Belongs to the GHMP kinase family. IspE subfamily.

The enzyme catalyses 4-CDP-2-C-methyl-D-erythritol + ATP = 4-CDP-2-C-methyl-D-erythritol 2-phosphate + ADP + H(+). Its pathway is isoprenoid biosynthesis; isopentenyl diphosphate biosynthesis via DXP pathway; isopentenyl diphosphate from 1-deoxy-D-xylulose 5-phosphate: step 3/6. Catalyzes the phosphorylation of the position 2 hydroxy group of 4-diphosphocytidyl-2C-methyl-D-erythritol. The sequence is that of 4-diphosphocytidyl-2-C-methyl-D-erythritol kinase from Haemophilus ducreyi (strain 35000HP / ATCC 700724).